A 273-amino-acid polypeptide reads, in one-letter code: Protein BRANCHLESS TRICHOME (273 aa).

The span at 1–12 (MKDMKMQSSPET) shows a compositional bias: polar residues. The segment at 1–30 (MKDMKMQSSPETMMTRIPTPDPHSTGVRED) is disordered. Residues 69–199 (IKVFMESELG…GERERNRMMK (131 aa)) are a coiled coil.

Interacts with STI.

In terms of biological role, acts as a key regulator of trichome branching. Could participate with STI in the same pathway. Also plays a role in integrating endoreplication levels with cell shape. The sequence is that of Protein BRANCHLESS TRICHOME (BLT) from Arabidopsis thaliana (Mouse-ear cress).